We begin with the raw amino-acid sequence, 576 residues long: Proton pump-interactor 3B (576 aa).

The interval 34 to 63 (SEVTTDEEEDTIFSGGDSSSGLAAEEDSSG) is disordered. Coiled coils occupy residues 132–155 (RMVIEEKKKEFDTLLEALRNLRCT) and 205–241 (EKEASINRVKSMALELNEVKNELDAITWKINDLSDKL). The segment covering 369-381 (RSEKVHKMNREDS) has biased composition (basic and acidic residues). The interval 369-395 (RSEKVHKMNREDSSSNSSEDGNVITDK) is disordered. Positions 411–467 (KKKEEEIDEEALKERKREEQLEKARLVMERKRKLQEKAAAKAAIRAQKEAEKKLKAI) form a coiled coil. A helical transmembrane segment spans residues 555–575 (WVWGLSSAALAVSLVLVVLLL).

The protein belongs to the plant Proton pump-interactor protein family.

It is found in the cell membrane. Its subcellular location is the endoplasmic reticulum membrane. Functionally, may regulate plasma membrane ATPase activity. In Arabidopsis thaliana (Mouse-ear cress), this protein is Proton pump-interactor 3B (PPI3B).